We begin with the raw amino-acid sequence, 248 residues long: Probable transcriptional regulatory protein RHE_CH03475 (248 aa).

The protein belongs to the TACO1 family.

The protein resides in the cytoplasm. This is Probable transcriptional regulatory protein RHE_CH03475 from Rhizobium etli (strain ATCC 51251 / DSM 11541 / JCM 21823 / NBRC 15573 / CFN 42).